The sequence spans 345 residues: Beta-ketoacyl-[acyl-carrier-protein] synthase III (345 aa).

Residues cysteine 114 and histidine 272 contribute to the active site. The ACP-binding stretch occupies residues 273–277 (QANQR). Asparagine 302 is a catalytic residue.

Belongs to the thiolase-like superfamily. FabH family. Homodimer.

It is found in the cytoplasm. The enzyme catalyses malonyl-[ACP] + acetyl-CoA + H(+) = 3-oxobutanoyl-[ACP] + CO2 + CoA. The protein operates within lipid metabolism; fatty acid biosynthesis. In terms of biological role, catalyzes the condensation reaction of fatty acid synthesis by the addition to an acyl acceptor of two carbons from malonyl-ACP. Catalyzes the first condensation reaction which initiates fatty acid synthesis and may therefore play a role in governing the total rate of fatty acid production. Possesses both acetoacetyl-ACP synthase and acetyl transacylase activities. Its substrate specificity determines the biosynthesis of branched-chain and/or straight-chain of fatty acids. The polypeptide is Beta-ketoacyl-[acyl-carrier-protein] synthase III (Rhodopirellula baltica (strain DSM 10527 / NCIMB 13988 / SH1)).